We begin with the raw amino-acid sequence, 206 residues long: Ribosomal RNA small subunit methyltransferase G (206 aa).

S-adenosyl-L-methionine-binding positions include G73, L78, 124 to 125 (VE), and R139.

This sequence belongs to the methyltransferase superfamily. RNA methyltransferase RsmG family.

Its subcellular location is the cytoplasm. It catalyses the reaction guanosine(527) in 16S rRNA + S-adenosyl-L-methionine = N(7)-methylguanosine(527) in 16S rRNA + S-adenosyl-L-homocysteine. Its function is as follows. Specifically methylates the N7 position of guanine in position 527 of 16S rRNA. This chain is Ribosomal RNA small subunit methyltransferase G, found in Serratia proteamaculans (strain 568).